A 402-amino-acid chain; its full sequence is Pyridinium-3,5-bisthiocarboxylic acid mononucleotide nickel insertion protein (402 aa).

Belongs to the LarC family.

It catalyses the reaction Ni(II)-pyridinium-3,5-bisthiocarboxylate mononucleotide = pyridinium-3,5-bisthiocarboxylate mononucleotide + Ni(2+). In terms of biological role, involved in the biosynthesis of a nickel-pincer cofactor ((SCS)Ni(II) pincer complex). Binds Ni(2+), and functions in nickel delivery to pyridinium-3,5-bisthiocarboxylic acid mononucleotide (P2TMN), to form the mature cofactor. Is thus probably required for the activation of nickel-pincer cofactor-dependent enzymes. This Desulfitobacterium hafniense (strain DSM 10664 / DCB-2) protein is Pyridinium-3,5-bisthiocarboxylic acid mononucleotide nickel insertion protein.